A 40-amino-acid chain; its full sequence is Metallothionein-1 (40 aa).

It belongs to the metallothionein superfamily. Type 5 family.

Functionally, this protein binds cations of several transition elements. It is thought to be involved in detoxification processes. The sequence is that of Metallothionein-1 (MtnA) from Drosophila ananassae (Fruit fly).